Consider the following 459-residue polypeptide: Argininosuccinate lyase (459 aa).

Belongs to the lyase 1 family. Argininosuccinate lyase subfamily.

It localises to the cytoplasm. It catalyses the reaction 2-(N(omega)-L-arginino)succinate = fumarate + L-arginine. It participates in amino-acid biosynthesis; L-arginine biosynthesis; L-arginine from L-ornithine and carbamoyl phosphate: step 3/3. This chain is Argininosuccinate lyase, found in Staphylococcus saprophyticus subsp. saprophyticus (strain ATCC 15305 / DSM 20229 / NCIMB 8711 / NCTC 7292 / S-41).